The primary structure comprises 243 residues: UPF0246 protein M28_Spy1772 (243 aa).

It belongs to the UPF0246 family.

The chain is UPF0246 protein M28_Spy1772 from Streptococcus pyogenes serotype M28 (strain MGAS6180).